Consider the following 238-residue polypeptide: Fatty acid metabolism regulator protein (238 aa).

The region spanning 6-74 (KGPASFAEKY…HGKPTRVNNF (69 aa)) is the HTH gntR-type domain. The H-T-H motif DNA-binding region spans 34 to 53 (ERELSELIGVTRTTLREVLQ).

In terms of assembly, homodimer.

The protein localises to the cytoplasm. Its function is as follows. Multifunctional regulator of fatty acid metabolism. This chain is Fatty acid metabolism regulator protein, found in Shewanella baltica (strain OS155 / ATCC BAA-1091).